The following is a 74-amino-acid chain: MKKNAPKSFEEALSRLESLTQAMQGEMPLEDALAAYQEGNELVIYCQTKLAQVEQKLQVLDADGLKELNLESDE.

Belongs to the XseB family. As to quaternary structure, heterooligomer composed of large and small subunits.

It is found in the cytoplasm. It carries out the reaction Exonucleolytic cleavage in either 5'- to 3'- or 3'- to 5'-direction to yield nucleoside 5'-phosphates.. Functionally, bidirectionally degrades single-stranded DNA into large acid-insoluble oligonucleotides, which are then degraded further into small acid-soluble oligonucleotides. The protein is Exodeoxyribonuclease 7 small subunit of Neisseria meningitidis serogroup A / serotype 4A (strain DSM 15465 / Z2491).